The primary structure comprises 272 residues: R-spondin-3 (272 aa).

An N-terminal signal peptide occupies residues 1 to 21; it reads MHLRLISWLFIILNFMEYIGS. 2 FU repeats span residues 35 to 86 and 92 to 135; these read PNVS…GYYG and INKC…GLEA. N36 carries an N-linked (GlcNAc...) asparagine glycan. 11 disulfides stabilise this stretch: C41–C48, C45–C54, C57–C76, C80–C95, C98–C105, C102–C111, C114–C125, C129–C142, C148–C190, C159–C166, and C199–C206. One can recognise a TSP type-1 domain in the interval 147–207; sequence HCEVSEWNPW…KCTVQRKKCQ (61 aa). Positions 201–272 are disordered; sequence VQRKKCQKGE…QKSVSVSTVH (72 aa). Over residues 213–223 the composition is skewed to basic residues; it reads KKGRERKRKKP. Basic and acidic residues predominate over residues 224–252; the sequence is NKGESKEAIPDSKSLESSKEIPEQRENKQ.

It belongs to the R-spondin family. Interacts with the extracellular domain of FZD8 and LRP6. It however does not form a ternary complex with FZD8 and LRP6. Interacts with WNT1. Binds heparin. Interacts with LGR4, LGR5 and LGR6. In terms of tissue distribution, ubiquitously expressed. Expressed at higher level in placenta, small intestine, fetal thymus and lymph node. Highly expressed in endothelial cells.

The protein localises to the secreted. Functionally, activator of the canonical Wnt signaling pathway by acting as a ligand for LGR4-6 receptors, which acts as a key regulator of angiogenesis. Upon binding to LGR4-6 (LGR4, LGR5 or LGR6), LGR4-6 associate with phosphorylated LRP6 and frizzled receptors that are activated by extracellular Wnt receptors, triggering the canonical Wnt signaling pathway to increase expression of target genes. Also regulates the canonical Wnt/beta-catenin-dependent pathway and non-canonical Wnt signaling by acting as an inhibitor of ZNRF3, an important regulator of the Wnt signaling pathway. Acts as a ligand for frizzled FZD8 and LRP6. May negatively regulate the TGF-beta pathway. Acts as a key regulator of angiogenesis by controlling vascular stability and pruning: acts by activating the non-canonical Wnt signaling pathway in endothelial cells. Can also amplify Wnt signaling pathway independently of LGR4-6 receptors, possibly by acting as a direct antagonistic ligand to RNF43 and ZNRF3. This Homo sapiens (Human) protein is R-spondin-3 (RSPO3).